The sequence spans 306 residues: Mycothiol acetyltransferase (306 aa).

N-acetyltransferase domains lie at 5-162 (VWAE…TFVP) and 155-306 (VRLR…AQGS). Acetyl-CoA contacts are provided by residues 82–84 (LIV) and 90–95 (RRGHGT). Residues glutamate 182, lysine 222, and glutamate 238 each coordinate 1D-myo-inositol 2-(L-cysteinylamino)-2-deoxy-alpha-D-glucopyranoside. Residues 242–244 (VGV) and 249–255 (QGGGLGK) contribute to the acetyl-CoA site. Tyrosine 276 contacts 1D-myo-inositol 2-(L-cysteinylamino)-2-deoxy-alpha-D-glucopyranoside.

It belongs to the acetyltransferase family. MshD subfamily. Monomer.

It catalyses the reaction 1D-myo-inositol 2-(L-cysteinylamino)-2-deoxy-alpha-D-glucopyranoside + acetyl-CoA = mycothiol + CoA + H(+). Functionally, catalyzes the transfer of acetyl from acetyl-CoA to desacetylmycothiol (Cys-GlcN-Ins) to form mycothiol. This chain is Mycothiol acetyltransferase, found in Saccharomonospora viridis (strain ATCC 15386 / DSM 43017 / JCM 3036 / CCUG 5913 / NBRC 12207 / NCIMB 9602 / P101) (Thermoactinomyces viridis).